Here is a 323-residue protein sequence, read N- to C-terminus: Peroxisomal targeting signal 2 receptor (323 aa).

WD repeat units follow at residues 65–96 (DWNDGLFDVTWSENNEHVLITCSGDGSLQLWD), 109–141 (EHAQEVYSVDWSQTRGEQLVVSGSWDQTVKLWD), 153–184 (GHESIIYSTIWSPHIPGCFASASGDQTLRIWD), 196–227 (AHQAEILSCDWCKYNENLLVTGAVDCSLRGWD), 240–271 (GHTYAIRRVKFSPFHASVLASCSYDFTVRFWN), and 284–315 (HHTEFTCGLDFSLQSPTQVADCSWDETIKIYD).

The protein belongs to the WD repeat peroxin-7 family. As to quaternary structure, interacts with PEX5; interaction only takes place when PEX7 is associated with cargo proteins. Interacts with VWA8. In terms of tissue distribution, ubiquitous. Highest expression in pancreas, skeletal muscle and heart.

Its subcellular location is the cytoplasm. It localises to the cytosol. The protein localises to the peroxisome matrix. In terms of biological role, receptor required for the peroxisomal import of proteins containing a C-terminal PTS2-type peroxisomal targeting signal. Specifically binds to cargo proteins containing a PTS2 peroxisomal targeting signal in the cytosol. Cargo protein-binding triggers interaction with PEX5 and formation of a ternary complex composed of PEX5 and PEX7 along with PTS2-containing cargo proteins, which is tranlocated into peroxisomes by passing through the PEX13-PEX14 docking complex. This chain is Peroxisomal targeting signal 2 receptor, found in Homo sapiens (Human).